A 388-amino-acid chain; its full sequence is Tumor protein p53-inducible protein 13 (388 aa).

The signal sequence occupies residues 1–27 (MVPPPPPPSRLLLVALVGLLSLHEVVA). Residues 28–304 (EPAEEAGTRC…ARGPTPRTEE (277 aa)) lie on the Extracellular side of the membrane. Residues 305–325 (AAWAAMALTFLLVLLTLATLC) traverse the membrane as a helical segment. At 326–388 (TRLHRNFRRS…DSGPDSESSD (63 aa)) the chain is on the cytoplasmic side. Basic residues predominate over residues 361–372 (PSRRIKRSRRRP). Positions 361–388 (PSRRIKRSRRRPLLPPTPDSGPDSESSD) are disordered.

Its subcellular location is the cell membrane. The protein localises to the cytoplasm. May act as a tumor suppressor. Inhibits tumor cell growth, when overexpressed. The protein is Tumor protein p53-inducible protein 13 (Tp53i13) of Rattus norvegicus (Rat).